The primary structure comprises 715 residues: Fatty acid oxidation complex subunit alpha (715 aa).

The enoyl-CoA hydratase/isomerase stretch occupies residues 1–189; that stretch reads MIYQGETLTV…KVGAIDAVVA (189 aa). Substrate is bound at residue D296. Residues 311 to 715 form a 3-hydroxyacyl-CoA dehydrogenase region; that stretch reads AKATSHAAVL…EMAAQGKTFY (405 aa). NAD(+)-binding positions include M325, D344, 401–403, K408, and S430; that span reads VVE. Catalysis depends on H451, which acts as the For 3-hydroxyacyl-CoA dehydrogenase activity. N454 is an NAD(+) binding site. Substrate-binding residues include N501 and Y661.

The protein in the N-terminal section; belongs to the enoyl-CoA hydratase/isomerase family. It in the C-terminal section; belongs to the 3-hydroxyacyl-CoA dehydrogenase family. Heterotetramer of two alpha chains (FadB) and two beta chains (FadA).

The catalysed reaction is a (3S)-3-hydroxyacyl-CoA + NAD(+) = a 3-oxoacyl-CoA + NADH + H(+). It carries out the reaction a (3S)-3-hydroxyacyl-CoA = a (2E)-enoyl-CoA + H2O. It catalyses the reaction a 4-saturated-(3S)-3-hydroxyacyl-CoA = a (3E)-enoyl-CoA + H2O. The enzyme catalyses (3S)-3-hydroxybutanoyl-CoA = (3R)-3-hydroxybutanoyl-CoA. The catalysed reaction is a (3Z)-enoyl-CoA = a 4-saturated (2E)-enoyl-CoA. It carries out the reaction a (3E)-enoyl-CoA = a 4-saturated (2E)-enoyl-CoA. It participates in lipid metabolism; fatty acid beta-oxidation. Functionally, involved in the aerobic and anaerobic degradation of long-chain fatty acids via beta-oxidation cycle. Catalyzes the formation of 3-oxoacyl-CoA from enoyl-CoA via L-3-hydroxyacyl-CoA. It can also use D-3-hydroxyacyl-CoA and cis-3-enoyl-CoA as substrate. The protein is Fatty acid oxidation complex subunit alpha of Aeromonas hydrophila subsp. hydrophila (strain ATCC 7966 / DSM 30187 / BCRC 13018 / CCUG 14551 / JCM 1027 / KCTC 2358 / NCIMB 9240 / NCTC 8049).